Reading from the N-terminus, the 440-residue chain is MPISKIHSRYVYDSRGNPTVEVDIVTETGLHRAIVPSGASTGSHEACELRDGDKSKWAGKGVTKAVANVNEIIAPALIKENLDVKDQAAVDAFLNKLDGTTNKTKIGANAILGVSMAVAKAAAAEKRVPLYAHISDLSGTKKPFVLPVPFMNVVNGGSHAGGRLAFQEFMIVPSGAPSFTEAMRQGAEVYQKLKSLTKKRYGQSAGNVGDEGGVAPDIQTAEEALDLITDAIEEAGYTGQIKIAMDVASSEFYKADEKKYDLDFKNPDSDKSKWITYEQLADQYKQLAAKYPIVSIEDPFAEDDWEAWSYFYKTSGSDFQIVGDDLTVTNPEFIKKAIETKACNALLLKVNQIGTITEAINAAKDSFAAGWGVMVSHRSGETEDVTIADIVVGLRAGQIKTGAPARSERLAKLNQILRIEEELGDKAVYAGDNFRTAINL.

Positions 120 to 189 (KAAAAEKRVP…TEAMRQGAEV (70 aa)) are igE-binding determinant. Residues His159 and Glu168 each contribute to the substrate site. The active-site Proton donor is the Glu211. Residues Asp246, Glu297, and Asp324 each contribute to the Mg(2+) site. Positions 297 and 324 each coordinate substrate. The active-site Proton acceptor is the Lys349. Residues 376–379 (SHRS) and Lys400 contribute to the substrate site.

Belongs to the enolase family. In terms of assembly, homodimer. Mg(2+) serves as cofactor.

It localises to the cytoplasm. It catalyses the reaction (2R)-2-phosphoglycerate = phosphoenolpyruvate + H2O. The protein operates within carbohydrate degradation; glycolysis; pyruvate from D-glyceraldehyde 3-phosphate: step 4/5. The sequence is that of Enolase (ENO) from Davidiella tassiana (Mycosphaerella tassiana).